We begin with the raw amino-acid sequence, 1123 residues long: Alpha-mannosidase E (1123 aa).

The first 21 residues, 1–21 (MNKTKLIKIIFVIGVWILLST), serve as a signal peptide directing secretion. Asn2 and Asn38 each carry an N-linked (GlcNAc...) asparagine glycan. Over 22–1072 (FIINIYNENF…KYNRPNHLAL (1051 aa)) the chain is Extracellular. The Zn(2+) site is built by His67 and Asp69. Residue Asn140 is glycosylated (N-linked (GlcNAc...) asparagine). Residues Asp150 and His409 each contribute to the Zn(2+) site. The active-site Nucleophile is Asp150. Asn521, Asn675, Asn858, Asn887, Asn975, and Asn990 each carry an N-linked (GlcNAc...) asparagine glycan. A helical membrane pass occupies residues 1073 to 1093 (ILSLSIGTPAGILIIVIALVV). The Cytoplasmic segment spans residues 1094-1123 (IYKKRKNRKTLTSSYSLLNLILKDRADSSP).

This sequence belongs to the glycosyl hydrolase 38 family. Requires Zn(2+) as cofactor.

It localises to the membrane. The catalysed reaction is Hydrolysis of terminal, non-reducing alpha-D-mannose residues in alpha-D-mannosides.. This chain is Alpha-mannosidase E (manE), found in Dictyostelium discoideum (Social amoeba).